A 1543-amino-acid chain; its full sequence is ATP-binding cassette sub-family A member 10 (1543 aa).

7 helical membrane passes run 83 to 103, 135 to 155, 185 to 205, 210 to 230, 240 to 260, 264 to 284, and 310 to 330; these read YWLK…IEVT, WFHF…SLNV, ICFI…IPIV, FMVI…LAFL, LAGL…FTVL, LPLS…TAGM, and IATF…TLYF. Residues 391-626 enclose the ABC transporter 1 domain; it reads IRIRNVIKEY…WGIGYHLSLH (236 aa). ATP is bound at residue 427 to 434; it reads GHNGAGKS. 8 helical membrane-spanning segments follow: residues 774-794, 890-910, 926-946, 985-1005, 1014-1034, 1046-1066, 1073-1093, and 1113-1133; these read LLCL…EKIM, LNCF…IFNF, IVLD…TNCV, IPLY…IFLG, FVLV…TYVL, GFWS…MVST, LILC…MLLI, and KTIL…LFVI. Residues 1153 to 1164 are compositionally biased toward basic and acidic residues; it reads ISPRSRETHPNP. The tract at residues 1153 to 1177 is disordered; the sequence is ISPRSRETHPNPEEPEEEDEDVQAE. The span at 1165–1174 shows a compositional bias: acidic residues; that stretch reads EEPEEEDEDV. Residues 1206–1440 enclose the ABC transporter 2 domain; sequence YETKKSCFST…FGRDYLLEIK (235 aa). 1239-1246 contacts ATP; that stretch reads GHNGAGKS.

It belongs to the ABC transporter superfamily. ABCA family. Widely expressed. Highly expressed in skeletal muscle, heart, brain and gastrointestinal tract.

It is found in the membrane. Probable transporter which may play a role in macrophage lipid transport and homeostasis. This is ATP-binding cassette sub-family A member 10 (ABCA10) from Homo sapiens (Human).